A 257-amino-acid polypeptide reads, in one-letter code: Imidazole glycerol phosphate synthase subunit HisF (257 aa).

Catalysis depends on residues D11 and D130.

Belongs to the HisA/HisF family. In terms of assembly, heterodimer of HisH and HisF.

The protein resides in the cytoplasm. It catalyses the reaction 5-[(5-phospho-1-deoxy-D-ribulos-1-ylimino)methylamino]-1-(5-phospho-beta-D-ribosyl)imidazole-4-carboxamide + L-glutamine = D-erythro-1-(imidazol-4-yl)glycerol 3-phosphate + 5-amino-1-(5-phospho-beta-D-ribosyl)imidazole-4-carboxamide + L-glutamate + H(+). It functions in the pathway amino-acid biosynthesis; L-histidine biosynthesis; L-histidine from 5-phospho-alpha-D-ribose 1-diphosphate: step 5/9. Its function is as follows. IGPS catalyzes the conversion of PRFAR and glutamine to IGP, AICAR and glutamate. The HisF subunit catalyzes the cyclization activity that produces IGP and AICAR from PRFAR using the ammonia provided by the HisH subunit. This Proteus mirabilis (strain HI4320) protein is Imidazole glycerol phosphate synthase subunit HisF.